Reading from the N-terminus, the 185-residue chain is Ribosome-recycling factor (185 aa).

The protein belongs to the RRF family.

It localises to the cytoplasm. In terms of biological role, responsible for the release of ribosomes from messenger RNA at the termination of protein biosynthesis. May increase the efficiency of translation by recycling ribosomes from one round of translation to another. This is Ribosome-recycling factor from Clostridium kluyveri (strain NBRC 12016).